The primary structure comprises 120 residues: MADARKLLGRMGEEAAARYLEKKGCRILSRNHCCRLGELDLVVSDGDVLVFVEVRARTGEEYGLAQESITGRKKSRLRLLAWQYLKEKGKTGSMCRFDVIAVLFDREGRVKRLEHFENAF.

Belongs to the UPF0102 family.

The sequence is that of UPF0102 protein PTH_1707 from Pelotomaculum thermopropionicum (strain DSM 13744 / JCM 10971 / SI).